Consider the following 357-residue polypeptide: MKFVDEAEIQVIAGNGGDGCVSFRREKFIPLGGPDGGDGGDGGSVWLVADENLNTLVDFRHERIFKAQRGVNGMGQQMYGKAGQDKIISVPIGTVVINVQTDEVIGDMVRHGDRLLVAKGGTGGLGNMHFKSSINRAPRQARPGEQGEERTLKLELKLLADIGMLGFPNVGKSTFIRAVSAATPKVADYPFTTLYPNLGVVKIEAYSSFVIADVPGLIEGAADGVGLGTQFLRHLQRTKLLLHMVDISATADAYGNEKVGVGLLPIEQVRKLEIELERHDPALLDKPRWLVLNKADLMPQEEAQALAEALIAELHWTAPWYLVSAVSREGTWPIMKSAMTLFEHQREVAAEQSVSSR.

The region spanning 1–159 (MKFVDEAEIQ…RTLKLELKLL (159 aa)) is the Obg domain. The 184-residue stretch at 160–343 (ADIGMLGFPN…IMKSAMTLFE (184 aa)) folds into the OBG-type G domain. Residues 166–173 (GFPNVGKS), 191–195 (FTTLY), 213–216 (DVPG), 293–296 (NKAD), and 324–326 (SAV) each bind GTP. 2 residues coordinate Mg(2+): serine 173 and threonine 193.

It belongs to the TRAFAC class OBG-HflX-like GTPase superfamily. OBG GTPase family. In terms of assembly, monomer. Requires Mg(2+) as cofactor.

Its subcellular location is the cytoplasm. In terms of biological role, an essential GTPase which binds GTP, GDP and possibly (p)ppGpp with moderate affinity, with high nucleotide exchange rates and a fairly low GTP hydrolysis rate. Plays a role in control of the cell cycle, stress response, ribosome biogenesis and in those bacteria that undergo differentiation, in morphogenesis control. This Xylella fastidiosa (strain 9a5c) protein is GTPase Obg.